Consider the following 1419-residue polypeptide: L-2-aminoadipate reductase (1419 aa).

Positions 880 to 956 (ETLTATERDI…GLAKEIERMK (77 aa)) constitute a Carrier domain. Serine 916 is modified (O-(pantetheine 4'-phosphoryl)serine).

This sequence belongs to the ATP-dependent AMP-binding enzyme family. Pantetheine 4'-phosphate is required as a cofactor.

It localises to the cytoplasm. The enzyme catalyses (S)-2-amino-6-oxohexanoate + NADP(+) + H2O = L-2-aminoadipate + NADPH + 2 H(+). It carries out the reaction (S)-2-amino-6-oxohexanoate + NAD(+) + H2O = L-2-aminoadipate + NADH + 2 H(+). The catalysed reaction is (S)-2-amino-6-oxohexanoate + AMP + diphosphate + NADP(+) = L-2-aminoadipate + ATP + NADPH + H(+). The protein operates within amino-acid biosynthesis; L-lysine biosynthesis via AAA pathway; L-lysine from L-alpha-aminoadipate (fungal route): step 1/3. Catalyzes the activation of alpha-aminoadipate by ATP-dependent adenylation and the reduction of activated alpha-aminoadipate by NADPH. The activated alpha-aminoadipate is bound to the phosphopantheinyl group of the enzyme itself before it is reduced to (S)-2-amino-6-oxohexanoate. The chain is L-2-aminoadipate reductase (lys1) from Schizosaccharomyces pombe (strain 972 / ATCC 24843) (Fission yeast).